The chain runs to 86 residues: Small ribosomal subunit protein bS20 (86 aa).

A disordered region spans residues 1–25 (MANSASSRKRARQAVKRNKHNSQIR). The segment covering 7-25 (SRKRARQAVKRNKHNSQIR) has biased composition (basic residues).

Belongs to the bacterial ribosomal protein bS20 family.

Its function is as follows. Binds directly to 16S ribosomal RNA. The chain is Small ribosomal subunit protein bS20 from Vesicomyosocius okutanii subsp. Calyptogena okutanii (strain HA).